The chain runs to 301 residues: Inosose dehydratase (301 aa).

This sequence belongs to the IolE/MocC family. Requires glutathione as cofactor. The cofactor is Co(2+). Mn(2+) serves as cofactor.

It catalyses the reaction scyllo-inosose = 3D-3,5/4-trihydroxycyclohexane-1,2-dione + H2O. Its function is as follows. Catalyzes the dehydration of inosose (2-keto-myo-inositol, 2KMI or 2,4,6/3,5-pentahydroxycyclohexanone) to 3D-(3,5/4)-trihydroxycyclohexane-1,2-dione (D-2,3-diketo-4-deoxy-epi-inositol). The protein is Inosose dehydratase of Salmonella typhimurium (strain LT2 / SGSC1412 / ATCC 700720).